The following is an 89-amino-acid chain: Small ribosomal subunit protein uS14 (89 aa).

This sequence belongs to the universal ribosomal protein uS14 family. In terms of assembly, part of the 30S ribosomal subunit. Contacts proteins S3 and S10.

Functionally, binds 16S rRNA, required for the assembly of 30S particles and may also be responsible for determining the conformation of the 16S rRNA at the A site. The sequence is that of Small ribosomal subunit protein uS14 from Aster yellows witches'-broom phytoplasma (strain AYWB).